The chain runs to 130 residues: Large ribosomal subunit protein bL12 (130 aa).

This sequence belongs to the bacterial ribosomal protein bL12 family. In terms of assembly, homodimer. Part of the ribosomal stalk of the 50S ribosomal subunit. Forms a multimeric L10(L12)X complex, where L10 forms an elongated spine to which 2 to 4 L12 dimers bind in a sequential fashion. Binds GTP-bound translation factors.

Forms part of the ribosomal stalk which helps the ribosome interact with GTP-bound translation factors. Is thus essential for accurate translation. The polypeptide is Large ribosomal subunit protein bL12 (Mycobacterium leprae (strain TN)).